Here is a 354-residue protein sequence, read N- to C-terminus: Guanine nucleotide-binding protein alpha-3 subunit (354 aa).

A lipid anchor (N-myristoyl glycine) is attached at glycine 2. The S-palmitoyl cysteine moiety is linked to residue cysteine 4. Residues 33 to 354 (KECKILLLGS…TNALKDSGIL (322 aa)) form the G-alpha domain. The interval 36-49 (KILLLGSGESGKST) is G1 motif. Residues 41 to 48 (GSGESGKS), 177 to 183 (LRARSKT), 202 to 206 (DVGGQ), 271 to 274 (NKID), and alanine 326 contribute to the GTP site. Mg(2+)-binding residues include serine 48 and threonine 183. Residues 175–183 (DVLRARSKT) form a G2 motif region. The tract at residues 198–207 (IHLFDVGGQR) is G3 motif. Residues 267–274 (ILFLNKID) are G4 motif. Positions 324–329 (TQATDT) are G5 motif.

It belongs to the G-alpha family. In terms of assembly, g proteins are composed of 3 units; alpha, beta and gamma. The alpha chain contains the guanine nucleotide binding site.

In terms of biological role, guanine nucleotide-binding proteins (G proteins) are involved as modulators or transducers in various transmembrane signaling systems. This subunit is involved in cAMP regulation and morphogenesis. It is essential for dimorphic switching in haploid cells. The polypeptide is Guanine nucleotide-binding protein alpha-3 subunit (FIL1) (Ustilago hordei (Barley covered smut fungus)).